Consider the following 634-residue polypeptide: Leucine--tRNA ligase subunit alpha (634 aa).

The 'HIGH' region motif lies at 43–51 (PSGRIHMGH).

The protein belongs to the class-I aminoacyl-tRNA synthetase family. As to quaternary structure, seems to consist of an alpha chain and a beta chain.

Its subcellular location is the cytoplasm. It carries out the reaction tRNA(Leu) + L-leucine + ATP = L-leucyl-tRNA(Leu) + AMP + diphosphate. The polypeptide is Leucine--tRNA ligase subunit alpha (leuS) (Aquifex aeolicus (strain VF5)).